The following is a 434-amino-acid chain: Probable exopolygalacturonase X (434 aa).

An N-terminal signal peptide occupies residues 1–23 (MKFLHTVAQTATLLLSLGASVEG). The segment at 35–54 (HHPFRPLPASTPRTKTCHVR) is disordered. Asn113, Asn129, and Asn199 each carry an N-linked (GlcNAc...) asparagine glycan. Residues 231 to 252 (SSNIVIQNSVVNNGDDCVSFKP) form a PbH1 1 repeat. Asp245 functions as the Proton donor in the catalytic mechanism. Residues Cys247 and Cys264 are joined by a disulfide bond. N-linked (GlcNAc...) asparagine glycosylation is found at Asn253 and Asn265. Residues 254–274 (STDILVQNMHCNGSHGISVGS) form a PbH1 2 repeat. The active site involves His268. Residues Asn292, Asn297, Asn329, Asn354, and Asn364 are each glycosylated (N-linked (GlcNAc...) asparagine). The PbH1 3 repeat unit spans residues 327 to 348 (VSNITYDRMYIENVDWAIEVTQ). Residues 362-394 (PSNLTISDVHIKNMWGTTSGKRDPNVGTIVCSS) form a PbH1 4 repeat. Cys392 and Cys398 are oxidised to a cystine. N-linked (GlcNAc...) asparagine glycans are attached at residues Asn407 and Asn430.

The protein belongs to the glycosyl hydrolase 28 family.

The protein resides in the secreted. The enzyme catalyses [(1-&gt;4)-alpha-D-galacturonosyl](n) + H2O = alpha-D-galacturonate + [(1-&gt;4)-alpha-D-galacturonosyl](n-1). In terms of biological role, specific in hydrolyzing the terminal glycosidic bond of polygalacturonic acid and oligogalacturonates. The sequence is that of Probable exopolygalacturonase X (pgaX) from Aspergillus terreus (strain NIH 2624 / FGSC A1156).